A 627-amino-acid polypeptide reads, in one-letter code: Protein fem-1 homolog B (627 aa).

6 ANK repeats span residues Q45–Q74, D87–H116, T120–I149, Y153–A182, C186–V215, and H218–S248. The TPR repeat unit spans residues S344–G377. ANK repeat units lie at residues D483 to A527 and E531 to M568.

It belongs to the fem-1 family. As to quaternary structure, component of a CRL2 E3 ubiquitin-protein ligase complex, also named ECS (Elongin BC-CUL2/5-SOCS-box protein) complex.

It is found in the cytoplasm. The protein localises to the nucleus. The protein operates within protein modification; protein ubiquitination. In terms of biological role, substrate-recognition component of a Cul2-RING (CRL2) E3 ubiquitin-protein ligase complex of the DesCEND (destruction via C-end degrons) pathway, which recognizes a C-degron located at the extreme C terminus of target proteins, leading to their ubiquitination and degradation. The C-degron recognized by the DesCEND pathway is usually a motif of less than ten residues and can be present in full-length proteins, truncated proteins or proteolytically cleaved forms. The CRL2(FEM1B) complex specifically recognizes proteins ending with -Gly-Leu-Asp-Arg, leading to their ubiquitination and degradation. In Gallus gallus (Chicken), this protein is Protein fem-1 homolog B.